The primary structure comprises 494 residues: ATP synthase subunit beta (494 aa).

Residue 177-184 participates in ATP binding; the sequence is GGAGVGKT.

Belongs to the ATPase alpha/beta chains family. In terms of assembly, F-type ATPases have 2 components, CF(1) - the catalytic core - and CF(0) - the membrane proton channel. CF(1) has five subunits: alpha(3), beta(3), gamma(1), delta(1), epsilon(1). CF(0) has three main subunits: a(1), b(2) and c(9-12). The alpha and beta chains form an alternating ring which encloses part of the gamma chain. CF(1) is attached to CF(0) by a central stalk formed by the gamma and epsilon chains, while a peripheral stalk is formed by the delta and b chains.

It localises to the cell membrane. The catalysed reaction is ATP + H2O + 4 H(+)(in) = ADP + phosphate + 5 H(+)(out). Its function is as follows. Produces ATP from ADP in the presence of a proton gradient across the membrane. The catalytic sites are hosted primarily by the beta subunits. This chain is ATP synthase subunit beta, found in Bifidobacterium adolescentis (strain ATCC 15703 / DSM 20083 / NCTC 11814 / E194a).